Here is a 440-residue protein sequence, read N- to C-terminus: Eukaryotic translation initiation factor 3 subunit E (440 aa).

The region spanning 219 to 392 (VYFNYPKGRD…GQVVMGAKTT (174 aa)) is the PCI domain.

The protein belongs to the eIF-3 subunit E family. Component of the eukaryotic translation initiation factor 3 (eIF-3) complex.

The protein resides in the cytoplasm. Component of the eukaryotic translation initiation factor 3 (eIF-3) complex, which is involved in protein synthesis of a specialized repertoire of mRNAs and, together with other initiation factors, stimulates binding of mRNA and methionyl-tRNAi to the 40S ribosome. The eIF-3 complex specifically targets and initiates translation of a subset of mRNAs involved in cell proliferation. This chain is Eukaryotic translation initiation factor 3 subunit E, found in Brugia malayi (Filarial nematode worm).